Consider the following 217-residue polypeptide: Ras-related protein RABA5b (217 aa).

GTP is bound at residue 19–26; that stretch reads GDSAVGKS. An Effector region motif is present at residues 41-49; sequence SKATIGVEF. Residues 67–71, 125–128, and 155–156 each bind GTP; these read DTAGQ, NKCD, and SA. S-geranylgeranyl cysteine attachment occurs at residues C214 and C215.

This sequence belongs to the small GTPase superfamily. Rab family.

The protein localises to the cell membrane. Intracellular vesicle trafficking and protein transport. In Arabidopsis thaliana (Mouse-ear cress), this protein is Ras-related protein RABA5b (RABA5B).